We begin with the raw amino-acid sequence, 328 residues long: DNA-directed RNA polymerase subunit alpha (328 aa).

Positions 1–234 are alpha N-terminal domain (alpha-NTD); sequence MQNSTTEFLK…DQMSIFADLQ (234 aa). Residues 248-328 are alpha C-terminal domain (alpha-CTD); the sequence is IDPVLLRPVD…AWPPVGLEKP (81 aa).

Belongs to the RNA polymerase alpha chain family. In terms of assembly, homodimer. The RNAP catalytic core consists of 2 alpha, 1 beta, 1 beta' and 1 omega subunit. When a sigma factor is associated with the core the holoenzyme is formed, which can initiate transcription.

It catalyses the reaction RNA(n) + a ribonucleoside 5'-triphosphate = RNA(n+1) + diphosphate. DNA-dependent RNA polymerase catalyzes the transcription of DNA into RNA using the four ribonucleoside triphosphates as substrates. In Neisseria meningitidis serogroup A / serotype 4A (strain DSM 15465 / Z2491), this protein is DNA-directed RNA polymerase subunit alpha.